The chain runs to 81 residues: Photosystem I iron-sulfur center (81 aa).

2 consecutive 4Fe-4S ferredoxin-type domains span residues 2-31 (AHSVKIYDTCIGCTQCVRACPTDVLEMIPW) and 39-68 (IASAPRTEDCVGCKRCESACPTDFLSVRVY). Residues cysteine 11, cysteine 14, cysteine 17, cysteine 21, cysteine 48, cysteine 51, cysteine 54, and cysteine 58 each coordinate [4Fe-4S] cluster.

As to quaternary structure, the eukaryotic PSI reaction center is composed of at least 11 subunits. It depends on [4Fe-4S] cluster as a cofactor.

It localises to the plastid. Its subcellular location is the chloroplast thylakoid membrane. The catalysed reaction is reduced [plastocyanin] + hnu + oxidized [2Fe-2S]-[ferredoxin] = oxidized [plastocyanin] + reduced [2Fe-2S]-[ferredoxin]. In terms of biological role, apoprotein for the two 4Fe-4S centers FA and FB of photosystem I (PSI); essential for photochemical activity. FB is the terminal electron acceptor of PSI, donating electrons to ferredoxin. The C-terminus interacts with PsaA/B/D and helps assemble the protein into the PSI complex. Required for binding of PsaD and PsaE to PSI. PSI is a plastocyanin-ferredoxin oxidoreductase, converting photonic excitation into a charge separation, which transfers an electron from the donor P700 chlorophyll pair to the spectroscopically characterized acceptors A0, A1, FX, FA and FB in turn. In Cycas taitungensis (Prince sago), this protein is Photosystem I iron-sulfur center.